We begin with the raw amino-acid sequence, 137 residues long: Neutral phospholipase A2 ammodytin I2 (137 aa).

The first 16 residues, 1 to 16 (MRTLWIVAVCLIGVEG), serve as a signal peptide directing secretion. 7 cysteine pairs are disulfide-bonded: cysteine 42-cysteine 131, cysteine 44-cysteine 60, cysteine 59-cysteine 111, cysteine 65-cysteine 137, cysteine 66-cysteine 104, cysteine 73-cysteine 97, and cysteine 91-cysteine 102. Positions 43, 45, and 47 each coordinate Ca(2+). Histidine 63 is a catalytic residue. Aspartate 64 contacts Ca(2+). Aspartate 105 is an active-site residue.

It belongs to the phospholipase A2 family. Group II subfamily. D49 sub-subfamily. Ca(2+) serves as cofactor. Expressed by the venom gland.

The protein localises to the secreted. The enzyme catalyses a 1,2-diacyl-sn-glycero-3-phosphocholine + H2O = a 1-acyl-sn-glycero-3-phosphocholine + a fatty acid + H(+). Snake venom phospholipase A2 (PLA2) that has enzymatic activity but is non-toxic. Displays low binding affinity and enzymatic activity on phosphatidylserine-containing vesicles and HEK-293 plasma membranes, in contrast to ammodytoxins that have high activity on these phospholipids. PLA2 catalyzes the calcium-dependent hydrolysis of the 2-acyl groups in 3-sn-phosphoglycerides. The sequence is that of Neutral phospholipase A2 ammodytin I2 from Vipera ammodytes ammodytes (Western sand viper).